The primary structure comprises 160 residues: Putative tRNA (cytidine(34)-2'-O)-methyltransferase (160 aa).

Residues Ile-82, Gly-107, Leu-128, and Ser-136 each contribute to the S-adenosyl-L-methionine site.

This sequence belongs to the class IV-like SAM-binding methyltransferase superfamily. RNA methyltransferase TrmH family. TrmL subfamily.

The protein localises to the cytoplasm. The catalysed reaction is cytidine(34) in tRNA + S-adenosyl-L-methionine = 2'-O-methylcytidine(34) in tRNA + S-adenosyl-L-homocysteine + H(+). The enzyme catalyses 5-carboxymethylaminomethyluridine(34) in tRNA(Leu) + S-adenosyl-L-methionine = 5-carboxymethylaminomethyl-2'-O-methyluridine(34) in tRNA(Leu) + S-adenosyl-L-homocysteine + H(+). In terms of biological role, could methylate the ribose at the nucleotide 34 wobble position in tRNA. This Bacillus subtilis (strain 168) protein is Putative tRNA (cytidine(34)-2'-O)-methyltransferase (cspR).